Consider the following 178-residue polypeptide: Protein GrpE (178 aa).

Positions 1–11 are enriched in polar residues; it reads MENTQENPTDQ. Residues 1-31 form a disordered region; it reads MENTQENPTDQTTEETGREAQAAENAAPAAE. Residues 19–31 are compositionally biased toward low complexity; that stretch reads EAQAAENAAPAAE.

It belongs to the GrpE family. Homodimer.

Its subcellular location is the cytoplasm. Participates actively in the response to hyperosmotic and heat shock by preventing the aggregation of stress-denatured proteins, in association with DnaK and GrpE. It is the nucleotide exchange factor for DnaK and may function as a thermosensor. Unfolded proteins bind initially to DnaJ; upon interaction with the DnaJ-bound protein, DnaK hydrolyzes its bound ATP, resulting in the formation of a stable complex. GrpE releases ADP from DnaK; ATP binding to DnaK triggers the release of the substrate protein, thus completing the reaction cycle. Several rounds of ATP-dependent interactions between DnaJ, DnaK and GrpE are required for fully efficient folding. The sequence is that of Protein GrpE from Burkholderia thailandensis (strain ATCC 700388 / DSM 13276 / CCUG 48851 / CIP 106301 / E264).